The following is a 132-amino-acid chain: MKKEGILNSELAKIADDLGHTDQVCIGDLGLPVPSGVKKIDLALTRGKPSFQEVLDIYLENILVEKVYLAEEIKENNPEQLAILLTKLSADVEIVFVSHETLKLMNHEVKAVVRTGENTPYSNIILQSGVAL.

Histidine 20 functions as the Proton donor in the catalytic mechanism. Substrate contacts are provided by residues aspartate 28, histidine 99, and 121 to 123; that span reads YSN.

The protein belongs to the RbsD / FucU family. RbsD subfamily. Homodecamer.

The protein localises to the cytoplasm. It catalyses the reaction beta-D-ribopyranose = beta-D-ribofuranose. Its pathway is carbohydrate metabolism; D-ribose degradation; D-ribose 5-phosphate from beta-D-ribopyranose: step 1/2. Functionally, catalyzes the interconversion of beta-pyran and beta-furan forms of D-ribose. This is D-ribose pyranase from Lactococcus lactis subsp. lactis (strain IL1403) (Streptococcus lactis).